The sequence spans 271 residues: MENICELFDDVILEIMNLLSDTDKINFMFCCSRFYYFIDLVYYNDIYDYYKIQNVSFINKFKKIRYLAVTDTIPSVITHLELDKSFVGSLENCQLPKLSCLKLTQLQYDSFKIYISPAVKIDILKLPTYLKYIDLDYSWDIETYSNSNNVIVKRLRTDFICPVENREGPKCGLMKTSCISTNYYSANYYQYINSQQTQLVTGKHHVPNIQTNKSVKQPIKYSSNTKSTINNIFTNILNNIPKNIPKYTPNNIPKIVPKNTHYRNSSKKYRY.

The 46-residue stretch at 4–49 folds into the F-box domain; sequence ICELFDDVILEIMNLLSDTDKINFMFCCSRFYYFIDLVYYNDIYDY. Positions 251–271 are disordered; that stretch reads NIPKIVPKNTHYRNSSKKYRY. Over residues 260-271 the composition is skewed to basic residues; the sequence is THYRNSSKKYRY.

The protein is Putative F-box protein L165 of Acanthamoeba polyphaga mimivirus (APMV).